The sequence spans 360 residues: Vitopine synthase (360 aa).

The protein belongs to the lysopine/nopaline/octopine/opine/vitopine dehydrogenases family.

This chain is Vitopine synthase (vis), found in Allorhizobium ampelinum (strain ATCC BAA-846 / DSM 112012 / S4) (Agrobacterium vitis (strain S4)).